We begin with the raw amino-acid sequence, 323 residues long: Formyl peptide receptor-related sequence 4 (323 aa).

Topologically, residues 1–29 (MEVNISMPLNGSEVVFYDSTTSRVLWILS) are extracellular. N-linked (GlcNAc...) asparagine glycosylation is found at Asn-4 and Asn-10. Residues 30–50 (LVVLFITFVLGVLGNGLVIWV) traverse the membrane as a helical segment. At 51 to 66 (AGFQMAHTVTTVSYLN) the chain is on the cytoplasmic side. The chain crosses the membrane as a helical span at residues 67-87 (LALSDLSFMATLPLHIISMVM). Topologically, residues 88–99 (RGKWLFGWFLCK) are extracellular. Cysteines 98 and 176 form a disulfide. The chain crosses the membrane as a helical span at residues 100-120 (LVHIIANINLFVSIFLITLIA). Residues 121 to 144 (MDRCICVLCPVWSQNHRTVSLARK) lie on the Cytoplasmic side of the membrane. A helical membrane pass occupies residues 145–165 (VVLGAWIFALLLTLPHFLFLT). At 166-202 (TVRDARGDVYCISKFESWVATSEEQLKVSVIAATASG) the chain is on the extracellular side. Residues 203–223 (IINFIIGFSMPMSFIAICYGL) traverse the membrane as a helical segment. Over 224–241 (MAAKICRRGFVNSSRPLR) the chain is Cytoplasmic. A helical membrane pass occupies residues 242-262 (VLTAVAVSFFVCWFPFQLIML). At 263–280 (LGNIFNNETLSIIHMLVN) the chain is on the extracellular side. N-linked (GlcNAc...) asparagine glycosylation occurs at Asn-269. A helical transmembrane segment spans residues 281-301 (PANTLASFNSCLNPILYVFLG). The Cytoplasmic portion of the chain corresponds to 302–323 (QEFRDRLIYSLYASLERALRED).

This sequence belongs to the G-protein coupled receptor 1 family. As to expression, expressed in 0.6 % of a subset of sensory neurons located in the apical layer of the vomeronasal organ. Each neuron appears to express only one receptor gene.

The protein resides in the cell membrane. In terms of biological role, may have an olfactory function associated with the identification of pathogens or of pathogenic states. The chain is Formyl peptide receptor-related sequence 4 (Fpr-rs4) from Mus musculus (Mouse).